Consider the following 865-residue polypeptide: Protein translocase subunit SecA (865 aa).

ATP-binding positions include Gln93, 111–115 (GEGKT), and Asp501. Zn(2+) is bound by residues Cys841, Cys843, Cys852, and Cys853.

It belongs to the SecA family. Monomer and homodimer. Part of the essential Sec protein translocation apparatus which comprises SecA, SecYEG and auxiliary proteins SecDF-YajC and YidC. The cofactor is Zn(2+).

It is found in the cell inner membrane. The protein localises to the cytoplasm. The enzyme catalyses ATP + H2O + cellular proteinSide 1 = ADP + phosphate + cellular proteinSide 2.. Part of the Sec protein translocase complex. Interacts with the SecYEG preprotein conducting channel. Has a central role in coupling the hydrolysis of ATP to the transfer of proteins into and across the cell membrane, serving as an ATP-driven molecular motor driving the stepwise translocation of polypeptide chains across the membrane. The chain is Protein translocase subunit SecA from Helicobacter pylori (strain Shi470).